Here is a 234-residue protein sequence, read N- to C-terminus: Adenosine 5'-phosphosulfate reductase (234 aa).

4 residues coordinate [4Fe-4S] cluster: C120, C121, C203, and C206. C229 serves as the catalytic Nucleophile; cysteine thiosulfonate intermediate.

This sequence belongs to the PAPS reductase family. CysH subfamily. Requires [4Fe-4S] cluster as cofactor.

It is found in the cytoplasm. The catalysed reaction is [thioredoxin]-disulfide + sulfite + AMP + 2 H(+) = adenosine 5'-phosphosulfate + [thioredoxin]-dithiol. Its pathway is sulfur metabolism; hydrogen sulfide biosynthesis; sulfite from sulfate. Its function is as follows. Catalyzes the formation of sulfite from adenosine 5'-phosphosulfate (APS) using thioredoxin as an electron donor. The polypeptide is Adenosine 5'-phosphosulfate reductase (Bacillus cereus (strain ZK / E33L)).